The sequence spans 930 residues: Translation initiation factor IF-2 (930 aa).

The span at 50–67 shows a compositional bias: low complexity; the sequence is FKPAAAPKVEAKPAAPKV. Disordered regions lie at residues 50–196 and 260–346; these read FKPA…RIDF and EVVP…HELP. 2 stretches are compositionally biased toward basic and acidic residues: residues 68–90 and 110–125; these read SAEKKAEKSEPAKPAVAKEEAKP and FKAEREARAKEQAERR. Residues 129-141 are compositionally biased toward low complexity; the sequence is KGNNRDQQQNGNR. Composition is skewed to basic and acidic residues over residues 157–172 and 262–295; these read RDNRRFNDQAKKEQGQ and VPEKKEPAVDTRRKKQARPDKNRDDYDHEEDGPR. Positions 309 to 318 are enriched in low complexity; that stretch reads NQKNSNWNNN. Positions 337 to 346 are enriched in basic and acidic residues; it reads VTERKFHELP. The tr-type G domain occupies 432 to 599; the sequence is ERPPVVTIMG…TVLLVAEIQE (168 aa). The segment at 441–448 is G1; that stretch reads GHVDHGKT. 441–448 is a binding site for GTP; that stretch reads GHVDHGKT. The interval 466 to 470 is G2; it reads GITQH. Residues 487 to 490 are G3; that stretch reads DTPG. Residues 487–491 and 541–544 contribute to the GTP site; these read DTPGH and NKID. Positions 541–544 are G4; it reads NKID. Residues 577-579 form a G5 region; it reads SAK.

The protein belongs to the TRAFAC class translation factor GTPase superfamily. Classic translation factor GTPase family. IF-2 subfamily.

It is found in the cytoplasm. In terms of biological role, one of the essential components for the initiation of protein synthesis. Protects formylmethionyl-tRNA from spontaneous hydrolysis and promotes its binding to the 30S ribosomal subunits. Also involved in the hydrolysis of GTP during the formation of the 70S ribosomal complex. This is Translation initiation factor IF-2 from Streptococcus pneumoniae serotype 19F (strain G54).